Reading from the N-terminus, the 188-residue chain is dCTP deaminase (188 aa).

Residue 109–114 coordinates dCTP; sequence KSTYAR. The Proton donor/acceptor role is filled by glutamate 135. 3 residues coordinate dCTP: glutamine 154, tyrosine 168, and glutamine 178.

Belongs to the dCTP deaminase family. In terms of assembly, homotrimer.

The catalysed reaction is dCTP + H2O + H(+) = dUTP + NH4(+). It participates in pyrimidine metabolism; dUMP biosynthesis; dUMP from dCTP (dUTP route): step 1/2. Its function is as follows. Catalyzes the deamination of dCTP to dUTP. This is dCTP deaminase from Helicobacter acinonychis (strain Sheeba).